The following is a 1016-amino-acid chain: Nonsense-mediated mRNA decay factor SMG5 (1016 aa).

N-acetylserine is present on S2. Phosphoserine occurs at positions 2 and 423. Disordered stretches follow at residues 408 to 561 (NPVP…PSEA) and 594 to 637 (PTTN…RSCR). Residues 449 to 466 (KSRKFSRLSCLRRRRHPP) show a composition bias toward basic residues. Residues 594-603 (PTTNPHTSAS) show a composition bias toward polar residues. The span at 619–628 (ASEEGSESEG) shows a compositional bias: acidic residues. Residues 798 to 841 (QSEQESLLQQAQAQFRMAQEEARRNRLMRDMAQLRLQLEVSQLE) adopt a coiled-coil conformation. A PINc domain is found at 872-995 (RQLATSGRFI…GPMQAALQAA (124 aa)).

In terms of assembly, interacts with TERT, PPP2CA and SMG1. Part of a complex that contains SMG1, SMG5, SMG7, PPP2CA, a short isoform of UPF3A (isoform UPF3AS, but not isoform UPF3AL) and phosphorylated UPF1. Not detected in complexes that contain unphosphorylated UPF1. In terms of tissue distribution, ubiquitous.

It is found in the cytoplasm. Its subcellular location is the nucleus. Functionally, plays a role in nonsense-mediated mRNA decay. Does not have RNase activity by itself. Promotes dephosphorylation of UPF1. Together with SMG7 is thought to provide a link to the mRNA degradation machinery involving exonucleolytic pathways, and to serve as an adapter for UPF1 to protein phosphatase 2A (PP2A), thereby triggering UPF1 dephosphorylation. Necessary for TERT activity. This chain is Nonsense-mediated mRNA decay factor SMG5, found in Homo sapiens (Human).